Here is a 263-residue protein sequence, read N- to C-terminus: UDP-N-acetylenolpyruvoylglucosamine reductase (263 aa).

Arginine 146 is an active-site residue. The Proton donor role is filled by serine 188. Glutamate 258 is an active-site residue.

Belongs to the MurB family. FAD serves as cofactor.

It is found in the cytoplasm. It carries out the reaction UDP-N-acetyl-alpha-D-muramate + NADP(+) = UDP-N-acetyl-3-O-(1-carboxyvinyl)-alpha-D-glucosamine + NADPH + H(+). It functions in the pathway cell wall biogenesis; peptidoglycan biosynthesis. Cell wall formation. The chain is UDP-N-acetylenolpyruvoylglucosamine reductase from Helicobacter hepaticus (strain ATCC 51449 / 3B1).